We begin with the raw amino-acid sequence, 351 residues long: Dihydroorotate dehydrogenase (quinone) (351 aa).

FMN contacts are provided by residues 65–69 and threonine 89; that span reads AGLDK. Lysine 69 is a substrate binding site. 114–118 serves as a coordination point for substrate; sequence NRLGF. Residues asparagine 150 and asparagine 183 each contribute to the FMN site. Asparagine 183 contributes to the substrate binding site. Residue serine 186 is the Nucleophile of the active site. Residue asparagine 188 coordinates substrate. 2 residues coordinate FMN: lysine 228 and threonine 256. 257-258 provides a ligand contact to substrate; that stretch reads NT. FMN is bound by residues glycine 279, glycine 308, and 329-330; that span reads YT.

It belongs to the dihydroorotate dehydrogenase family. Type 2 subfamily. As to quaternary structure, monomer. Requires FMN as cofactor.

The protein resides in the cell membrane. It catalyses the reaction (S)-dihydroorotate + a quinone = orotate + a quinol. Its pathway is pyrimidine metabolism; UMP biosynthesis via de novo pathway; orotate from (S)-dihydroorotate (quinone route): step 1/1. Catalyzes the conversion of dihydroorotate to orotate with quinone as electron acceptor. This Acidovorax sp. (strain JS42) protein is Dihydroorotate dehydrogenase (quinone).